Consider the following 531-residue polypeptide: MDVGADEFEQSLPLLQELVAGADFVGLDIEFTGLRSNLSRPQQISLFDLPSEWYLKTRQSVQQFTICQIGLSMFSSIEGESNKYVAHSCNFFLFPTTFGILDSEFSFQASSVQFLNQYGFDYNKFLKNGIPYMNEEQEKKIKHSILRGNWRVRSSLDKDQIKVVIDKVTQWLDLAEEGDQMTLPGIAGFQAFEVQLVLRQALPNIWTVLKEEWVIVKKVSQPQRWYLEHASCDQVSCWKEQILLSARGFSVFFQMLVKAQKPLVGHNMMMDLLHLHEKFFRPLPESYDQFKQNIHSLFPVLIDTKNVTKDIWKELRFPRVSNLLEVYEVLSSNLNPTKDSGPVIIHARQCKKYAETKCPHEAAYDAFLCGSVLLKVAHLLLQRVHGNGAVHEPAFPQYLDVLAPYVNQVNLIRAGVPKINFSGPDYPSIRPPVLILTVKRWPGVSEQQVYREFQNLCKFDVRRFTRSQFLLLTNKFKDARSVLKEYRNHPTLQVSLYRSWRHSPNITCLLQVCSIVTTWAMIAFLLGRPMP.

Mg(2+) is bound by residues Asp28, Glu30, Asp271, and Asp365. The chain crosses the membrane as a helical span at residues 506–526 (ITCLLQVCSIVTTWAMIAFLL).

It belongs to the CAF1 family. Mg(2+) serves as cofactor. In terms of tissue distribution, specifically expressed in embryonic stem cells. Highly expressed in testis.

It is found in the endoplasmic reticulum membrane. The catalysed reaction is Exonucleolytic cleavage of poly(A) to 5'-AMP.. In terms of biological role, 3'-exoribonuclease that has a preference for poly(A) tails of mRNAs, thereby efficiently degrading poly(A) tails. Exonucleolytic degradation of the poly(A) tail is often the first step in the decay of eukaryotic mRNAs and is also used to silence certain maternal mRNAs translationally during oocyte maturation and early embryonic development. May act as a regulator of multipotency in embryonic stem cells. Is a critical factor for proper spermatogenesis, involved in pre-piRNAs processing to generate mature piRNAs. The polypeptide is Poly(A)-specific ribonuclease PNLDC1 (Mus musculus (Mouse)).